Reading from the N-terminus, the 319-residue chain is Malate dehydrogenase (319 aa).

NAD(+) is bound by residues 10–15 and aspartate 34; that span reads GSGNIG. Substrate is bound by residues arginine 83 and arginine 89. NAD(+) is bound by residues asparagine 96 and 119-121; that span reads ITN. The substrate site is built by asparagine 121 and arginine 152. The active-site Proton acceptor is the histidine 176.

It belongs to the LDH/MDH superfamily. MDH type 3 family.

It catalyses the reaction (S)-malate + NAD(+) = oxaloacetate + NADH + H(+). Catalyzes the reversible oxidation of malate to oxaloacetate. In Paramagnetospirillum magneticum (strain ATCC 700264 / AMB-1) (Magnetospirillum magneticum), this protein is Malate dehydrogenase.